The chain runs to 72 residues: Late effector protein 1 (72 aa).

The first 22 residues, 1 to 22 (MKCYLVVVVAALCTLVAQGSVG), serve as a signal peptide directing secretion. The N-linked (GlcNAc...) asparagine glycan is linked to Asn-66.

This sequence belongs to the lep1 family. As to quaternary structure, interacts at the cell wall with secreted rep1 repellent peptides.

It localises to the secreted. The protein resides in the cell wall. Core effector contributing to spore formation and tumor formation at the host plant. Modulates surface hydrophobicity promoting cell-cell or cell-surface contacts. Lep1 and rep1 interact in aerial hyphae to form a strong hydrophobic layer. Plays a crucial role in hyphal aggregation that might be a prerequisite for strong proliferation of diploid cells and for induction of the morphological changes associated with spore formation. The chain is Late effector protein 1 from Sporisorium reilianum (strain SRZ2) (Maize head smut fungus).